We begin with the raw amino-acid sequence, 433 residues long: Enolase (433 aa).

Position 163 (Q163) interacts with (2R)-2-phosphoglycerate. Catalysis depends on E205, which acts as the Proton donor. Mg(2+) is bound by residues D242, E291, and D318. Positions 343, 372, 373, and 394 each coordinate (2R)-2-phosphoglycerate. The active-site Proton acceptor is the K343.

This sequence belongs to the enolase family. Mg(2+) serves as cofactor.

It is found in the cytoplasm. The protein localises to the secreted. Its subcellular location is the cell surface. It catalyses the reaction (2R)-2-phosphoglycerate = phosphoenolpyruvate + H2O. The protein operates within carbohydrate degradation; glycolysis; pyruvate from D-glyceraldehyde 3-phosphate: step 4/5. Catalyzes the reversible conversion of 2-phosphoglycerate (2-PG) into phosphoenolpyruvate (PEP). It is essential for the degradation of carbohydrates via glycolysis. The sequence is that of Enolase from Methylibium petroleiphilum (strain ATCC BAA-1232 / LMG 22953 / PM1).